Consider the following 319-residue polypeptide: Chromoplast-specific carotenoid-associated protein C2, chromoplastic (319 aa).

A chromoplast-targeting transit peptide spans 1–55; the sequence is MTSIAFCNAFTVNPFLAAARRSPPPLTPLTSVALSPARKPRILAIFHPRTFPSFR.

It belongs to the PAP/fibrillin family.

It is found in the plastid. It localises to the chromoplast. May be involved in carotenoid sequestration within chromoplasts. This is Chromoplast-specific carotenoid-associated protein C2, chromoplastic (CHRC2) from Oncidium hybrid cultivar (Orchid).